The sequence spans 938 residues: MLKALLGDPNARKIKKFQPLVTEINLLEEDIKNLSDEELRSKTSEFKERLDKARNYDEREEILEEILPEAFAIVREAGIRVLGMRHFDVQLLGGMVLHKGQIAEMKTGEGKTLVATLPAYLNGLTGKGVHVVTVNDYLARRDAEWMGQVHRFLGLSVGLIQAGMSPEERKKNYACDITYTTNSELGFDYLRDNMATVMGEVVQRPFNYCVIDEVDSILIDEARTPLIISGPIDRPTEKYILAAEIAKQLVRQKVEDGPGDYEVNEKDRNVLMTDEGFKRAEELLGVTDLYDQENPWAHYISNAIRAKELQKKDVNYIVRSGEIVIVDEFTGRVLPGRRWGDGLHQAVEAKEGVEIQQETQTLATITYQNFFLLYPKLSGMTGTAKTEETELEKVYNLQVTIIPTNRVSRRQDLADVVYKNEQAKWNAVAEECQQMHEQGRPVLVGTTSVEKSEVLSLLLQGRNIPHNLLNARPENVERESEIVAQAGRAGAVTIATNMAGRGTDIILGGNSDYMARLKIREYLMPKLVMPEDDNLAFSLPSLGERNRPQGFAPGKKKKNWRASAEIFPTELPKEVENALKEAVKFAVDTHGTQSLPELEVEEKIAIAAEKAPTDDPVIQKLREVYKLIRKSYEDYTGKEHDEVVERGGLHVIGTERHESRRIDNQLRGRAGRQGDPGSTHFFLSLEDNLLRIFGGDRVAGLMDAFRVEEDMPIESGMLTRSLEGAQRKVETFYYDARKQVFEYDEVMNNQRRAIYAERRRVLEGMDLKEQVLQYAEKTMDEIVMAYVNPELPAEEWDLEKLISKSQEFVYLLADITAKDVEEMSVNDIKMFLHEEVRKAYEIKERQVDSIRAGLMRDAERYFILQQIDMLWREHLQAMEALRESIGLRGYGQKDPLIEYKQEGYEMFLEMMIDIRRNVVYSLFQFQPQGQPQAVASEQ.

Residues Q90, G108–T112, and D504 each bind ATP.

This sequence belongs to the SecA family. Monomer and homodimer. Part of the essential Sec protein translocation apparatus which comprises SecA, SecYEG and auxiliary proteins SecDF. Other proteins may also be involved.

The protein resides in the cell inner membrane. It localises to the cellular thylakoid membrane. The protein localises to the cytoplasm. The catalysed reaction is ATP + H2O + cellular proteinSide 1 = ADP + phosphate + cellular proteinSide 2.. Its function is as follows. Part of the Sec protein translocase complex. Interacts with the SecYEG preprotein conducting channel. Has a central role in coupling the hydrolysis of ATP to the transfer of proteins into and across the cell membrane, serving as an ATP-driven molecular motor driving the stepwise translocation of polypeptide chains across the membrane. In terms of biological role, probably participates in protein translocation into and across both the cytoplasmic and thylakoid membranes in cyanobacterial cells. The sequence is that of Protein translocase subunit SecA from Microcystis aeruginosa (strain NIES-843 / IAM M-2473).